The chain runs to 616 residues: Glucoamylase P (616 aa).

The N-terminal stretch at 1 to 29 (MRLLPSSCAGALSLLCSLAIAAPTELKAR) is a signal peptide. Trp149 serves as a coordination point for substrate. Asn200 is a glycosylation site (N-linked (GlcNAc...) asparagine). The active-site Proton acceptor is Asp205. Glu208 acts as the Proton donor in catalysis. Asn427 is a glycosylation site (N-linked (GlcNAc...) asparagine). The CBM20 domain occupies 501–608 (VTSSCQVSIT…AVTTDDAWMG (108 aa)).

Belongs to the glycosyl hydrolase 15 family.

It localises to the secreted. The catalysed reaction is Hydrolysis of terminal (1-&gt;4)-linked alpha-D-glucose residues successively from non-reducing ends of the chains with release of beta-D-glucose.. The polypeptide is Glucoamylase P (GAMP) (Amorphotheca resinae (Creosote fungus)).